A 576-amino-acid polypeptide reads, in one-letter code: Urease subunit alpha (576 aa).

A Urease domain is found at 132-576; that stretch reads GGVDTHIHFI…LPMAQRYFLF (445 aa). The Ni(2+) site is built by His-137, His-139, and Lys-220. The residue at position 220 (Lys-220) is an N6-carboxylysine. His-222 is a binding site for substrate. His-249 and His-275 together coordinate Ni(2+). His-323 serves as the catalytic Proton donor. Position 363 (Asp-363) interacts with Ni(2+).

This sequence belongs to the metallo-dependent hydrolases superfamily. Urease alpha subunit family. As to quaternary structure, heterotrimer of UreA (gamma), UreB (beta) and UreC (alpha) subunits. Three heterotrimers associate to form the active enzyme. It depends on Ni cation as a cofactor. In terms of processing, carboxylation allows a single lysine to coordinate two nickel ions.

The protein resides in the cytoplasm. It carries out the reaction urea + 2 H2O + H(+) = hydrogencarbonate + 2 NH4(+). Its pathway is nitrogen metabolism; urea degradation; CO(2) and NH(3) from urea (urease route): step 1/1. In Arthrobacter sp. (strain FB24), this protein is Urease subunit alpha.